A 99-amino-acid chain; its full sequence is A-type ATP synthase subunit F (99 aa).

It belongs to the V-ATPase F subunit family. As to quaternary structure, has multiple subunits with at least A(3), B(3), C, D, E, F, H, I and proteolipid K(x).

It localises to the cell membrane. Its function is as follows. Component of the A-type ATP synthase that produces ATP from ADP in the presence of a proton gradient across the membrane. The protein is A-type ATP synthase subunit F of Methanococcus maripaludis (strain C6 / ATCC BAA-1332).